The chain runs to 297 residues: Bifunctional protein FolD (297 aa).

Residues G166 to S168, S191, and I232 each bind NADP(+).

It belongs to the tetrahydrofolate dehydrogenase/cyclohydrolase family. As to quaternary structure, homodimer.

It catalyses the reaction (6R)-5,10-methylene-5,6,7,8-tetrahydrofolate + NADP(+) = (6R)-5,10-methenyltetrahydrofolate + NADPH. The enzyme catalyses (6R)-5,10-methenyltetrahydrofolate + H2O = (6R)-10-formyltetrahydrofolate + H(+). It participates in one-carbon metabolism; tetrahydrofolate interconversion. Catalyzes the oxidation of 5,10-methylenetetrahydrofolate to 5,10-methenyltetrahydrofolate and then the hydrolysis of 5,10-methenyltetrahydrofolate to 10-formyltetrahydrofolate. This Phenylobacterium zucineum (strain HLK1) protein is Bifunctional protein FolD.